The following is a 154-amino-acid chain: Myoglobin (154 aa).

Positions 2–148 constitute a Globin domain; sequence GLSDGEWQQV…FRNDIAAKYK (147 aa). Ser-4 bears the Phosphoserine mark. Residue His-65 participates in nitrite binding. His-65 is an O2 binding site. His-94 provides a ligand contact to heme b.

It belongs to the globin family. As to quaternary structure, monomeric.

It is found in the cytoplasm. It localises to the sarcoplasm. It catalyses the reaction Fe(III)-heme b-[protein] + nitric oxide + H2O = Fe(II)-heme b-[protein] + nitrite + 2 H(+). The catalysed reaction is H2O2 + AH2 = A + 2 H2O. Functionally, monomeric heme protein which primary function is to store oxygen and facilitate its diffusion within muscle tissues. Reversibly binds oxygen through a pentacoordinated heme iron and enables its timely and efficient release as needed during periods of heightened demand. Depending on the oxidative conditions of tissues and cells, and in addition to its ability to bind oxygen, it also has a nitrite reductase activity whereby it regulates the production of bioactive nitric oxide. Under stress conditions, like hypoxia and anoxia, it also protects cells against reactive oxygen species thanks to its pseudoperoxidase activity. The chain is Myoglobin (MB) from Equus quagga burchellii (Burchell's zebra).